The sequence spans 144 residues: Large ribosomal subunit protein uL16 (144 aa).

The protein belongs to the universal ribosomal protein uL16 family. Part of the 50S ribosomal subunit.

Functionally, binds 23S rRNA and is also seen to make contacts with the A and possibly P site tRNAs. This is Large ribosomal subunit protein uL16 from Novosphingobium aromaticivorans (strain ATCC 700278 / DSM 12444 / CCUG 56034 / CIP 105152 / NBRC 16084 / F199).